The sequence spans 222 residues: Chromatin-associated protein SWI6 (222 aa).

The span at Met1–Leu15 shows a compositional bias: basic and acidic residues. Disordered regions lie at residues Met1 to Asp26 and Glu77 to Tyr147. Positions Glu16 to Asp26 are enriched in acidic residues. The 60-residue stretch at Tyr28–Arg87 folds into the Chromo domain.

As to quaternary structure, interacts with DMT5.

The protein resides in the nucleus. In terms of biological role, recognizes and binds histone H3 tails methylated at 'Lys-9', leading to epigenetic repression. Localizes DMT5 to heterochromatin characterized by trimethylation of histone H3 tails at 'Lys-9'. The chain is Chromatin-associated protein SWI6 from Cryptococcus neoformans var. grubii serotype A (strain H99 / ATCC 208821 / CBS 10515 / FGSC 9487) (Filobasidiella neoformans var. grubii).